The primary structure comprises 489 residues: Lysine--tRNA ligase (489 aa).

Mg(2+) is bound by residues E399 and E406.

This sequence belongs to the class-II aminoacyl-tRNA synthetase family. As to quaternary structure, homodimer. Mg(2+) is required as a cofactor.

The protein resides in the cytoplasm. The enzyme catalyses tRNA(Lys) + L-lysine + ATP = L-lysyl-tRNA(Lys) + AMP + diphosphate. The sequence is that of Lysine--tRNA ligase from Malacoplasma penetrans (strain HF-2) (Mycoplasma penetrans).